Here is a 275-residue protein sequence, read N- to C-terminus: Ovocalyxin-32 (275 aa).

An N-terminal signal peptide occupies residues 1 to 23 (MPGLRAALPAALLLLSSFPPAAA). 2 consecutive Cystatin LXN-type domains span residues 32–131 (PGVM…NKKQ) and 151–255 (TANY…GLED). The tract at residues 254–275 (EDGSGQDSGSAAGTSHETKGNF) is disordered. The span at 256 to 268 (GSGQDSGSAAGTS) shows a compositional bias: low complexity.

This sequence belongs to the protease inhibitor I47 (latexin) family. Expressed at high levels in the uterine and isthmus regions of the oviduct, and concentrated in the eggshell.

The protein localises to the secreted. In terms of biological role, component of the matrix of the eggshell. This is Ovocalyxin-32 from Gallus gallus (Chicken).